The chain runs to 574 residues: Proline--tRNA ligase (574 aa).

This sequence belongs to the class-II aminoacyl-tRNA synthetase family. ProS type 1 subfamily. As to quaternary structure, homodimer.

The protein resides in the cytoplasm. It catalyses the reaction tRNA(Pro) + L-proline + ATP = L-prolyl-tRNA(Pro) + AMP + diphosphate. Catalyzes the attachment of proline to tRNA(Pro) in a two-step reaction: proline is first activated by ATP to form Pro-AMP and then transferred to the acceptor end of tRNA(Pro). As ProRS can inadvertently accommodate and process non-cognate amino acids such as alanine and cysteine, to avoid such errors it has two additional distinct editing activities against alanine. One activity is designated as 'pretransfer' editing and involves the tRNA(Pro)-independent hydrolysis of activated Ala-AMP. The other activity is designated 'posttransfer' editing and involves deacylation of mischarged Ala-tRNA(Pro). The misacylated Cys-tRNA(Pro) is not edited by ProRS. The polypeptide is Proline--tRNA ligase (Pseudoalteromonas translucida (strain TAC 125)).